Here is a 435-residue protein sequence, read N- to C-terminus: Mitogen-activated protein kinase HOG1 (435 aa).

Thr2 carries the post-translational modification N-acetylthreonine. The Protein kinase domain occupies 23–302 (YNDLNPVGMG…AADALAHPYS (280 aa)). ATP is bound by residues 29–37 (VGMGAFGLV) and Lys52. Asp144 functions as the Proton acceptor in the catalytic mechanism. Residues Cys156 and Cys161 each coordinate arsenite. A Phosphothreonine; by PBS2 modification is found at Thr174. A TXY motif is present at residues 174–176 (TGY). Tyr176 carries the post-translational modification Phosphotyrosine; by PBS2. Cys205 is a binding site for arsenite.

This sequence belongs to the protein kinase superfamily. Ser/Thr protein kinase family. MAP kinase subfamily. HOG1 sub-subfamily. Interacts with CDC37, HOT1, KIN28, PTP2, PTP3, RBP1, RCK2, RPD3, SIC1, SMP1 and SIN4. Requires Mg(2+) as cofactor. Post-translationally, activated by PBS2-mediated concomitant phosphorylation at Thr-174 and Tyr-176. Dually phosphorylated on Thr-174 and Tyr-176, which activates the enzyme.

Its subcellular location is the cytoplasm. The protein resides in the nucleus. It catalyses the reaction L-seryl-[protein] + ATP = O-phospho-L-seryl-[protein] + ADP + H(+). The enzyme catalyses L-threonyl-[protein] + ATP = O-phospho-L-threonyl-[protein] + ADP + H(+). With respect to regulation, activated by tyrosine and threonine phosphorylation. Inactivated by dephosphorylation via recruitment of PTC1 to the PBS2-HOG1 complex after adaptation to osmotic stress. PTP2 and PTP3 inactivate HOG1 by dephosphorylating Tyr-176, while the PP2Cs PTC1 and PTC2 or PTC3 dephosphorylate Thr-174 in the activation loop. Functionally, proline-directed serine/threonine-protein kinase involved in a signal transduction pathway that is activated by changes in the osmolarity of the extracellular environment. Controls osmotic regulation of transcription via the stress response element (STRE) in promoters of target genes. Upon osmotic shock, associates with the SKO1-SSN6-TUP1 complex, phosphorylates SKO1, and converts it into an activator that subsequently recruits Swi/Snf and SAGA complexes. Activates the SMP1 transcription factor and the RCK2 kinase, both also involved in the regulation of the expression of a subset of osmotic stress-related genes. Phosphorylation of HSL1 by HOG1 leads to a G2 arrest essential for cell survival at high osmolarity. Also mediates cell-cycle arrest in G1 phase by the dual targeting of SIC1. Phosphorylates methyltransferase DOT1 at least on 'Ser-565' and 'Thr-576'. Regulates MFA2 ARE-mediated translation in response to carbon source. Targets RPD3 histone deacetylase to osmoresponsive promoters to induce gene expression on stress. Required for the Golgi apparatus localization of MNN1. Plays an essential role in maintaining water homeostasis, arsenite detoxification, copper-resistance, cold-resistance, hydrogen peroxide response, adaptation to citric acid stress, and repression of the mating pathway activity. Functions as an arsenic sensor and effector via direct binding to arsenic and subsequent phosphorylation of the ARR1 transcription factor. In Saccharomyces cerevisiae (strain ATCC 204508 / S288c) (Baker's yeast), this protein is Mitogen-activated protein kinase HOG1 (HOG1).